Reading from the N-terminus, the 638-residue chain is Trichohyalin-like protein 1 (638 aa).

The EF-hand domain occupies 49 to 84 (HVFHAVERKLNLLNFDRDGTISFEEFVLAIFSLLNP). Residues 134–638 (SEMASSGQPS…ALEAESLEAQ (505 aa)) are disordered. A compositionally biased stretch (polar residues) spans 166–179 (LPRNVSEPNDPENQ). 3 stretches are compositionally biased toward basic and acidic residues: residues 221–246 (IPRE…QRPT), 294–309 (DDTK…KDAG), and 318–328 (EEPKADAKVAE). Over residues 343–357 (DQSVQSRSRNVSETS) the composition is skewed to polar residues. Basic and acidic residues-rich tracts occupy residues 358 to 372 (SRGE…HERI), 395 to 409 (REND…KDPS), 419 to 435 (EIKE…HSEE), 479 to 490 (RIQDKPVRKEDH), 526 to 548 (AEPH…KQES), and 622 to 631 (AGRENRKALE).

The protein belongs to the S-100 family.

The chain is Trichohyalin-like protein 1 (Tchhl1) from Mus musculus (Mouse).